Here is a 160-residue protein sequence, read N- to C-terminus: uncharacterized protein (160 aa).

Residues L37 to Y110 form the Cupin type-2 domain.

It is found in the virion. This is an uncharacterized protein from Acanthamoeba polyphaga mimivirus (APMV).